The sequence spans 154 residues: Protein X (154 aa).

The segment at 68 to 117 (PCALRFTSARRMETTVNAPGNLPKVLHKRTLGLSVMSTTDLEAYFKDCVF) is mitochondrial targeting sequence.

The protein belongs to the orthohepadnavirus protein X family. As to quaternary structure, may form homodimer. May interact with host CEBPA, CFLAR, CREB1, DDB1, E4F1, HBXIP, HSPD1/HSP60, NFKBIA, POLR2E and SMAD4. Interacts with host SMC5-SMC6 complex and induces its degradation. Interacts with host TRPC4AP; leading to prevent ubiquitination of TRPC4AP. Interacts with host PLSCR1; this interaction promotes ubiquitination and degradation of HBx and impairs HBx-mediated cell proliferation. In terms of processing, a fraction may be phosphorylated in insect cells and HepG2 cells, a human hepatoblastoma cell line. Phosphorylated in vitro by host protein kinase C or mitogen-activated protein kinase. N-acetylated in insect cells.

It is found in the host cytoplasm. The protein localises to the host nucleus. It localises to the host mitochondrion. Multifunctional protein that plays a role in silencing host antiviral defenses and promoting viral transcription. Does not seem to be essential for HBV infection. May be directly involved in development of cirrhosis and liver cancer (hepatocellular carcinoma). Most of cytosolic activities involve modulation of cytosolic calcium. The effect on apoptosis is controversial depending on the cell types in which the studies have been conducted. May induce apoptosis by localizing in mitochondria and causing loss of mitochondrial membrane potential. May also modulate apoptosis by binding host CFLAR, a key regulator of the death-inducing signaling complex (DISC). Promotes viral transcription by using the host E3 ubiquitin ligase DDB1 to target the SMC5-SMC6 complex to proteasomal degradation. This host complex would otherwise bind to viral episomal DNA, and prevents its transcription. Moderately stimulates transcription of many different viral and cellular transcription elements. Promoters and enhancers stimulated by HBx contain DNA binding sites for NF-kappa-B, AP-1, AP-2, c-EBP, ATF/CREB, or the calcium-activated factor NF-AT. This Hepatitis B virus genotype B2 (isolate Vietnam/16091/1992) (HBV-B) protein is Protein X.